A 1185-amino-acid chain; its full sequence is 205 kDa microtubule-associated protein (1185 aa).

Low complexity predominate over residues 146 to 159 (EPNQLPEQLQQQQQ). A disordered region spans residues 146 to 196 (EPNQLPEQLQQQQQIESQGVHEDPRQEDEDEHSSVATTYGTSSLSENNSSP). The segment covering 179–196 (SVATTYGTSSLSENNSSP) has biased composition (polar residues). Phosphoserine occurs at positions 354 and 448. Tyr-450 carries the phosphotyrosine modification. Phosphoserine occurs at positions 709, 710, and 712. Thr-721 carries the post-translational modification Phosphothreonine. Ser-728 carries the phosphoserine modification. The tract at residues 745-977 (TAADGQSISQ…ASTKVRPAAT (233 aa)) is microtubule-binding. A compositionally biased stretch (low complexity) spans 856-866 (SIATKTSTTSS). 2 disordered regions span residues 856–1035 (SIAT…TSTA) and 1054–1114 (SASL…SSPA). 2 stretches are compositionally biased toward polar residues: residues 867–881 (LTGN…NVGS) and 908–936 (TITN…STNA). Phosphoserine is present on Ser-874. A compositionally biased stretch (low complexity) spans 940 to 952 (ATSGTGSVASSTA). Residues 989 to 999 (PRSTISSTTTV) show a composition bias toward polar residues. Residues 1003–1015 (PSTSTPSFSTRSP) show a composition bias toward low complexity. Polar residues-rich tracts occupy residues 1016 to 1026 (NKQQSNGLGKN) and 1054 to 1066 (SASL…STSR). A phosphoserine mark is found at Ser-1075 and Ser-1086. Over residues 1100–1111 (LTPQSKDGTAKS) the composition is skewed to polar residues. At Ser-1121 the chain carries Phosphoserine.

The protein resides in the cytoplasm. It localises to the cytoskeleton. Its subcellular location is the spindle. Its function is as follows. May play an important role in the regulation of microtubule assembly and interaction. This chain is 205 kDa microtubule-associated protein (Map205), found in Drosophila melanogaster (Fruit fly).